Reading from the N-terminus, the 144-residue chain is Large ribosomal subunit protein uL11 (144 aa).

It belongs to the universal ribosomal protein uL11 family. In terms of assembly, part of the ribosomal stalk of the 50S ribosomal subunit. Interacts with L10 and the large rRNA to form the base of the stalk. L10 forms an elongated spine to which L12 dimers bind in a sequential fashion forming a multimeric L10(L12)X complex. In terms of processing, one or more lysine residues are methylated.

Forms part of the ribosomal stalk which helps the ribosome interact with GTP-bound translation factors. The chain is Large ribosomal subunit protein uL11 from Acidiphilium cryptum (strain JF-5).